Here is a 124-residue protein sequence, read N- to C-terminus: Small ribosomal subunit protein eS6 (124 aa).

This sequence belongs to the eukaryotic ribosomal protein eS6 family.

This chain is Small ribosomal subunit protein eS6, found in Methanococcus maripaludis (strain C6 / ATCC BAA-1332).